The primary structure comprises 616 residues: MAPRFSWSLATSWHALAILALWPASTLAGDKSAADYYVRELPGLPKNSPPIKMHAGHIEVTPETNGNLFFWHFQNNHIANRQRTVIWLNGGPGCSSEDGALMEVGPYRVTKDNALTLNNGTWNEFANLLFVDNPVGTGFSYVDTNSYIHGLNAMATQFITFLEKFFALFPEYQSDDLYIAGESYAGQHIPYIARAILDRNKSKSRAETWNLGGLLIGNGWISPQDQSSAYLKFSLERGLIEKGSDNAQQLQQMQRICDKEMSINPGHVDYPECESILNKILELTRVGSGDQECINMYDVRLRDSAPSCGMNWPPDLKYVGPYLRQPQVISALNLDKQRNTGWQECNSMVNANFRNQNATASISLLPDILKEVPILLFSGAEDLICNHVGTEELISNLAWNEGKGFEVTPGNWAPRRQWTFEGEVAGFWQEARNLTYVLFHNASHMVPFDYPRRSRDMLDRFMKVDISSIGGEPSDSRIDGEKGPDTSVGGAKNNTQQHEEETKQKLKEAQWLAYQRSGEVVLVIVIIAASVWGYFVWRQRRKGTAYSALQSDEAAGQSRTGLAAFHNRQSDRDLEAAAFDETTVDNIPLQESIGRGESKYSIGDDSDEEEGETNKT.

Residues 1 to 28 form the signal peptide; that stretch reads MAPRFSWSLATSWHALAILALWPASTLA. Residues 29–516 are Lumenal-facing; that stretch reads GDKSAADYYV…KEAQWLAYQR (488 aa). Asparagine 119 carries an N-linked (GlcNAc...) asparagine glycan. Residue serine 183 is part of the active site. N-linked (GlcNAc...) asparagine glycans are attached at residues asparagine 200 and asparagine 357. The active site involves aspartate 382. N-linked (GlcNAc...) asparagine glycosylation is found at asparagine 433 and asparagine 441. Histidine 444 is an active-site residue. The interval 469-502 is disordered; the sequence is IGGEPSDSRIDGEKGPDTSVGGAKNNTQQHEEET. Over residues 474-484 the composition is skewed to basic and acidic residues; that stretch reads SDSRIDGEKGP. Asparagine 493 carries an N-linked (GlcNAc...) asparagine glycan. A helical transmembrane segment spans residues 517-537; sequence SGEVVLVIVIIAASVWGYFVW. Residues 538 to 616 lie on the Cytoplasmic side of the membrane; the sequence is RQRRKGTAYS…DEEEGETNKT (79 aa). Residues 578 to 616 form a disordered region; sequence AFDETTVDNIPLQESIGRGESKYSIGDDSDEEEGETNKT. Over residues 604–616 the composition is skewed to acidic residues; it reads DDSDEEEGETNKT.

The protein belongs to the peptidase S10 family.

Its subcellular location is the golgi apparatus. The protein resides in the trans-Golgi network membrane. It catalyses the reaction Preferential release of a C-terminal arginine or lysine residue.. Its function is as follows. Protease with a carboxypeptidase B-like function involved in the C-terminal processing of the lysine and arginine residues from protein precursors. Promotes cell fusion and is involved in the programmed cell death. The sequence is that of Pheromone-processing carboxypeptidase KEX1 (KEX1) from Metarhizium robertsii (strain ARSEF 23 / ATCC MYA-3075) (Metarhizium anisopliae (strain ARSEF 23)).